Reading from the N-terminus, the 384-residue chain is Glucans biosynthesis protein C (384 aa).

10 consecutive transmembrane segments (helical) span residues 17 to 37, 54 to 74, 91 to 111, 140 to 160, 173 to 193, 212 to 232, 240 to 260, 274 to 294, 311 to 331, and 338 to 358; these read AWLM…THSW, FIHA…SYML, VGIP…ILLQ, LWFL…FTWF, AISL…YAAI, FIVM…LAFI, FTTP…AYLL, TESV…FSLG, ASLF…AYIT, and LIGF…LYEI.

This sequence belongs to the acyltransferase 3 family. OpgC subfamily.

The protein resides in the cell membrane. Its pathway is glycan metabolism; osmoregulated periplasmic glucan (OPG) biosynthesis. Its function is as follows. Necessary for the succinyl substitution of periplasmic glucans. Could catalyze the transfer of succinyl residues from the cytoplasmic side of the membrane to the nascent glucan backbones on the periplasmic side of the membrane. The protein is Glucans biosynthesis protein C of Salmonella typhimurium (strain LT2 / SGSC1412 / ATCC 700720).